Here is a 387-residue protein sequence, read N- to C-terminus: S-adenosylmethionine synthase (387 aa).

An ATP-binding site is contributed by His-15. Residue Asp-17 coordinates Mg(2+). Residue Glu-43 coordinates K(+). Residues Glu-56 and Gln-99 each contribute to the L-methionine site. Residues 99–109 (QSPDIALGVNR) form a flexible loop region. ATP-binding positions include 166-168 (DAK), 232-233 (RF), Asp-241, 247-248 (RK), Ala-264, and Lys-268. Asp-241 is an L-methionine binding site. Lys-272 provides a ligand contact to L-methionine.

The protein belongs to the AdoMet synthase family. Homotetramer; dimer of dimers. The cofactor is Mg(2+). K(+) is required as a cofactor.

It localises to the cytoplasm. It catalyses the reaction L-methionine + ATP + H2O = S-adenosyl-L-methionine + phosphate + diphosphate. The protein operates within amino-acid biosynthesis; S-adenosyl-L-methionine biosynthesis; S-adenosyl-L-methionine from L-methionine: step 1/1. Its function is as follows. Catalyzes the formation of S-adenosylmethionine (AdoMet) from methionine and ATP. The overall synthetic reaction is composed of two sequential steps, AdoMet formation and the subsequent tripolyphosphate hydrolysis which occurs prior to release of AdoMet from the enzyme. This chain is S-adenosylmethionine synthase, found in Nitrosomonas eutropha (strain DSM 101675 / C91 / Nm57).